We begin with the raw amino-acid sequence, 442 residues long: Protein translocase subunit SecF (442 aa).

Residues 1–39 (MASKAKTGRDDEATSAVELTEATESAVARTDGDSTTDTA) form a disordered region. Transmembrane regions (helical) follow at residues 67–87 (WFGVSGAIVAVAIASIVFRGF), 187–207 (ITKKAVIALVVFLVLVALYIT), 218–238 (AITAMLFDLTVTAGVYSLVGF), 243–263 (ATVIGLLTILGFSLYDTVIVF), 301–321 (LIGVLPVLALMVVAVWLLGVG), and 331–351 (LIGIIIGTYSSIFFATPLLVT). Positions 366 to 442 (VLKRRNSGSP…PTGKRNAGRR (77 aa)) are disordered. Positions 402–432 (QASSQSAPRAAQGSSKPAPGARPVRPVGTRR) are enriched in low complexity. Basic residues predominate over residues 433 to 442 (PTGKRNAGRR).

This sequence belongs to the SecD/SecF family. SecF subfamily. As to quaternary structure, forms a complex with SecD. Part of the essential Sec protein translocation apparatus which comprises SecA, SecYEG and auxiliary proteins SecDF. Other proteins may also be involved.

The protein resides in the cell membrane. Functionally, part of the Sec protein translocase complex. Interacts with the SecYEG preprotein conducting channel. SecDF uses the proton motive force (PMF) to complete protein translocation after the ATP-dependent function of SecA. This is Protein translocase subunit SecF from Mycobacterium tuberculosis (strain ATCC 25618 / H37Rv).